We begin with the raw amino-acid sequence, 317 residues long: DNA-directed RNA polymerase subunit alpha 2 (317 aa).

Positions 1–227 (MALENLLHPT…NQLRNIVDIE (227 aa)) are alpha N-terminal domain (alpha-NTD). The segment at 241–317 (INPILLKHVE…TLIENWPQDL (77 aa)) is alpha C-terminal domain (alpha-CTD).

It belongs to the RNA polymerase alpha chain family. Homodimer. The RNAP catalytic core consists of 2 alpha, 1 beta, 1 beta' and 1 omega subunit. When a sigma factor is associated with the core the holoenzyme is formed, which can initiate transcription.

It catalyses the reaction RNA(n) + a ribonucleoside 5'-triphosphate = RNA(n+1) + diphosphate. Functionally, DNA-dependent RNA polymerase catalyzes the transcription of DNA into RNA using the four ribonucleoside triphosphates as substrates. In Francisella tularensis subsp. holarctica (strain FTNF002-00 / FTA), this protein is DNA-directed RNA polymerase subunit alpha 2.